A 523-amino-acid chain; its full sequence is Putative oxidoreductase TDA3 (523 aa).

Residues 157–172 (NSSLSSSGSSLKNDSA) show a composition bias toward low complexity. A disordered region spans residues 157–189 (NSSLSSSGSSLKNDSASNEEEGSDIHVSSSVPS). Residues S189, S204, and S306 each carry the phosphoserine modification.

It belongs to the TDA3 family. In terms of assembly, interacts with BTN2.

Its subcellular location is the cytoplasm. It localises to the late endosome. Its function is as follows. Putative oxidoreductase that negatively regulates the retrieval of cargo from late endosomes to the Golgi. Regulates YIF1 and KEX2 localization. Required for fast DNA replication. This is Putative oxidoreductase TDA3 (TDA3) from Saccharomyces cerevisiae (strain ATCC 204508 / S288c) (Baker's yeast).